The chain runs to 281 residues: Diaminopimelate epimerase (281 aa).

Substrate is bound by residues asparagine 13, glutamine 46, and asparagine 66. The Proton donor role is filled by cysteine 75. Substrate-binding positions include 76–77 (GN), asparagine 160, asparagine 193, and 211–212 (ER). Catalysis depends on cysteine 220, which acts as the Proton acceptor. A substrate-binding site is contributed by 221–222 (GT).

It belongs to the diaminopimelate epimerase family. As to quaternary structure, homodimer.

It is found in the cytoplasm. The catalysed reaction is (2S,6S)-2,6-diaminopimelate = meso-2,6-diaminopimelate. It participates in amino-acid biosynthesis; L-lysine biosynthesis via DAP pathway; DL-2,6-diaminopimelate from LL-2,6-diaminopimelate: step 1/1. In terms of biological role, catalyzes the stereoinversion of LL-2,6-diaminopimelate (L,L-DAP) to meso-diaminopimelate (meso-DAP), a precursor of L-lysine and an essential component of the bacterial peptidoglycan. This Acinetobacter baylyi (strain ATCC 33305 / BD413 / ADP1) protein is Diaminopimelate epimerase.